We begin with the raw amino-acid sequence, 211 residues long: Pyridoxine/pyridoxamine 5'-phosphate oxidase (211 aa).

Residues 7 to 10 (RREY) and Lys65 contribute to the substrate site. Residues 60-65 (RIVLLK), 75-76 (YT), Arg81, Lys82, and Gln104 contribute to the FMN site. The substrate site is built by Tyr122, Arg126, and Ser130. FMN is bound by residues 139–140 (QS) and Trp184. 190-192 (RLH) contacts substrate. FMN is bound at residue Arg194.

This sequence belongs to the pyridoxamine 5'-phosphate oxidase family. Homodimer. FMN is required as a cofactor.

The catalysed reaction is pyridoxamine 5'-phosphate + O2 + H2O = pyridoxal 5'-phosphate + H2O2 + NH4(+). It catalyses the reaction pyridoxine 5'-phosphate + O2 = pyridoxal 5'-phosphate + H2O2. Its pathway is cofactor metabolism; pyridoxal 5'-phosphate salvage; pyridoxal 5'-phosphate from pyridoxamine 5'-phosphate: step 1/1. It functions in the pathway cofactor metabolism; pyridoxal 5'-phosphate salvage; pyridoxal 5'-phosphate from pyridoxine 5'-phosphate: step 1/1. In terms of biological role, catalyzes the oxidation of either pyridoxine 5'-phosphate (PNP) or pyridoxamine 5'-phosphate (PMP) into pyridoxal 5'-phosphate (PLP). The chain is Pyridoxine/pyridoxamine 5'-phosphate oxidase from Vibrio atlanticus (strain LGP32) (Vibrio splendidus (strain Mel32)).